Consider the following 626-residue polypeptide: Endoglucanase 19 (626 aa).

A signal peptide spans 1–23 (MGSRTTISILVVLLLGLVQLAIS). Aspartate 79 acts as the Nucleophile in catalysis. Catalysis depends on residues histidine 412, aspartate 464, and glutamate 473. A disordered region spans residues 515–536 (APVPQRKPTKPPAASSPSPITI). Residues 526–536 (PAASSPSPITI) show a composition bias toward low complexity. Residues asparagine 560 and asparagine 622 are each glycosylated (N-linked (GlcNAc...) asparagine).

This sequence belongs to the glycosyl hydrolase 9 (cellulase E) family.

The protein localises to the secreted. The enzyme catalyses Endohydrolysis of (1-&gt;4)-beta-D-glucosidic linkages in cellulose, lichenin and cereal beta-D-glucans.. The chain is Endoglucanase 19 from Arabidopsis thaliana (Mouse-ear cress).